The primary structure comprises 864 residues: Disintegrin and metalloproteinase domain-containing protein 15 (864 aa).

The first 17 residues, 1 to 17 (MRLALLWALGLLGAGSP), serve as a signal peptide directing secretion. The disordered stretch occupies residues 17–49 (PRPSPPLPNIGGTEEEQQASPERTQSRSLENQV). Positions 18–208 (RPSPPLPNIG…EQHHLRRLKR (191 aa)) are excised as a propeptide. The span at 34–49 (QASPERTQSRSLENQV) shows a compositional bias: polar residues. N-linked (GlcNAc...) asparagine glycosylation occurs at N57. A Cysteine switch motif is present at residues 178–185 (HTCAPSWH). C180 lines the Zn(2+) pocket. Residues 209–698 (DVVTETKIVE…QLRATSSLTT (490 aa)) are Extracellular-facing. Residues 215–416 (KIVELVIVAD…GMGSCLFEWP (202 aa)) enclose the Peptidase M12B domain. N-linked (GlcNAc...) asparagine glycosylation occurs at N239. Intrachain disulfides connect C325–C411, C367–C395, C369–C378, and C482–C502. H350 is a Zn(2+) binding site. E351 is a catalytic residue. Residues H354 and H360 each coordinate Zn(2+). N391 and N394 each carry an N-linked (GlcNAc...) asparagine glycan. One can recognise a Disintegrin domain in the interval 423-510 (SSLCGNMFVD…QCPPDIRLGD (88 aa)). N-linked (GlcNAc...) asparagine glycosylation is found at N608 and N613. Disulfide bonds link C659–C669, C663–C675, and C677–C686. One can recognise an EGF-like domain in the interval 659–687 (CRSKCHGHGVCDSSRHCHCDEGWAPPDCM). Residues 699 to 719 (GLLLSLLLLLVLVLLGASYWY) traverse the membrane as a helical segment. Phosphotyrosine; by HCK and LCK occurs at positions 717 and 737. Topologically, residues 720-864 (RARLHQRLCQ…PPPAASSLYL (145 aa)) are cytoplasmic. Residues 738–864 (RAAQSGPPER…PPPAASSLYL (127 aa)) are disordered. Over residues 753–765 (RAQQMPGTKQANV) the composition is skewed to polar residues. 2 stretches are compositionally biased toward pro residues: residues 768-780 (PVPP…PNPV) and 810-825 (PQGP…PLPA). The SH3-binding signature appears at 816–822 (PPPPRKP). Residues 826–850 (NPQGRPPLGDLPGPGDGSLQLVVPS) are compositionally biased toward low complexity. The SH3-binding signature appears at 851–857 (RPAPPPP).

Interacts with ITAGV-ITGB3 (vitronectin receptor). Interacts with SH3GL2 and SNX9; this interaction occurs preferentially with ADAM15 precursor, rather than the processed form, suggesting it occurs in a secretory pathway compartment prior to the medial Golgi. Interacts with ITAG9-ITGB1. Interacts specifically with Src family protein-tyrosine kinases (PTKs). Interacts with SH3PXD2A. Interacts with ITAGV-ITGB1. Interacts with GRB2, HCK, ITSN1, ITSN2, LYN, MAPK1, MAPK3, NCF1, NCK1, nephrocystin, PTK6, SNX33, LCK and SRC. Zn(2+) is required as a cofactor. The precursor is cleaved by a furin endopeptidase. Post-translationally, phosphorylation increases association with PTKs. In terms of tissue distribution, predominantly expressed in brain, spinal cord, sciatic nerve and lung. Expressed at lower levels in all other tissues. In the peripheral nervous system, expressed predominantly by Schwann cells. In the central nervous system, preferentially expressed by neuronal cells.

It localises to the endomembrane system. It is found in the cell junction. The protein localises to the adherens junction. The protein resides in the cell projection. Its subcellular location is the cilium. It localises to the flagellum. It is found in the cytoplasmic vesicle. The protein localises to the secretory vesicle. The protein resides in the acrosome. Functionally, active metalloproteinase with gelatinolytic and collagenolytic activity. Plays a role in the wound healing process. Mediates both heterotypic intraepithelial cell/T-cell interactions and homotypic T-cell aggregation. Inhibits beta-1 integrin-mediated cell adhesion and migration of airway smooth muscle cells. Suppresses cell motility on or towards fibronectin possibly by driving alpha-v/beta-1 integrin (ITAGV-ITGB1) cell surface expression via ERK1/2 inactivation. Cleaves E-cadherin in response to growth factor deprivation. Plays a role in glomerular cell migration. Plays a role in pathological neovascularization. May play a role in cartilage remodeling. May be proteolytically processed, during sperm epididymal maturation and the acrosome reaction. May play a role in sperm-egg binding through its disintegrin domain. This Rattus norvegicus (Rat) protein is Disintegrin and metalloproteinase domain-containing protein 15 (Adam15).